A 183-amino-acid chain; its full sequence is uncharacterized protein (183 aa).

A disordered region spans residues 1–23; the sequence is MGSSFVIDRSSSSPAPPRGPAPK.

This is an uncharacterized protein from Saccharomyces cerevisiae (strain ATCC 204508 / S288c) (Baker's yeast).